Consider the following 87-residue polypeptide: uncharacterized protein (87 aa).

This is an uncharacterized protein from Saccharomyces cerevisiae (strain ATCC 204508 / S288c) (Baker's yeast).